Reading from the N-terminus, the 684-residue chain is Pentatricopeptide repeat-containing protein At4g14850 (684 aa).

14 PPR repeats span residues 5–39 (SADA…LDSP), 41–71 (PPFL…TPAR), 72–106 (NVVS…GVVP), 107–141 (NDFT…GRIL), 142–172 (DVFV…IPER), 173–207 (NLET…DGHP), 208–242 (NSIT…GFDT), 243–277 (DVSV…NAVS), 278–308 (WCSL…IVET), 309–343 (SDFM…CVER), 344–374 (TIFV…MPEK), 375–409 (NLVT…GCGP), 412–442 (NYMT…MRST), and 448–478 (GAEH…MPIQ). A type E motif; degenerate region spans residues 483 to 558 (VWGALQNACR…GAGYSWITVK (76 aa)). The interval 559–589 (NQVHAFQAKDRSHILNKEIQTTLAKLRNEME) is type E(+) motif; degenerate. The type DYW motif stretch occupies residues 590–684 (AAGYKPDLKL…DGICSCKDYW (95 aa)).

The protein belongs to the PPR family. PCMP-H subfamily.

Acts as a regulatory factor of isoprenoid biosynthesis. Could bind RNA. This chain is Pentatricopeptide repeat-containing protein At4g14850 (LOI1), found in Arabidopsis thaliana (Mouse-ear cress).